The following is a 260-amino-acid chain: Emerin (260 aa).

N-acetylmethionine is present on Met-1. Residues 1-45 (MDDYAVLSDTELAAVLRQYNIPHGPILGSTRKLYEKKIFEYETQR) form the LEM domain. A phosphoserine mark is found at Ser-8 and Ser-29. Positions 46 to 224 (RRLSPPSSSS…PTAALGQDRQ (179 aa)) are interaction with F-actin. Position 49 is a phosphoserine; by PKA (Ser-49). Residues Ser-54, Ser-69, Ser-72, Ser-88, Ser-99, Ser-142, Ser-143, and Ser-144 each carry the phosphoserine modification. At Tyr-162 the chain carries Phosphotyrosine. Residues 169-188 (RPISNVSRSSLGLSYYPRSS) are interaction with CTNNB1. 3 positions are modified to phosphoserine: Ser-172, Ser-175, and Ser-177. The tract at residues 184 to 206 (YPRSSTSSVSSSSSSPSSWLTRR) is disordered. The segment covering 187 to 201 (SSTSSVSSSSSSPSS) has biased composition (low complexity). A helical transmembrane segment spans residues 225–245 (VPLWGQLLLFLAFATFLLFVY).

In terms of assembly, interacts with lamins A and C, BANF1, GMCL, BCLAF1 and YTHDC1/YT521. Interacts with TMEM43; the interaction retains emerin in the inner nuclear membrane. Interacts with ACTB, SPTAN1, F-actin, CTNNB1 and beta-tubulin. Interacts with SUN1 and SUN2. Interacts with TMEM201. Interacts with NEMP1.

Its subcellular location is the nucleus inner membrane. The protein resides in the nucleus outer membrane. In terms of biological role, stabilizes and promotes the formation of a nuclear actin cortical network. Stimulates actin polymerization in vitro by binding and stabilizing the pointed end of growing filaments. Inhibits beta-catenin activity by preventing its accumulation in the nucleus. Acts by influencing the nuclear accumulation of beta-catenin through a CRM1-dependent export pathway. Links centrosomes to the nuclear envelope via a microtubule association. Required for proper localization of non-farnesylated prelamin-A/C. Together with NEMP1, contributes to nuclear envelope stiffness in germ cells. In Rattus norvegicus (Rat), this protein is Emerin (Emd).